A 346-amino-acid polypeptide reads, in one-letter code: Biotin synthase (346 aa).

The segment covering 1–12 (MPDTATVSSESE) has biased composition (polar residues). Positions 1 to 21 (MPDTATVSSESEFSGHAHVAA) are disordered. One can recognise a Radical SAM core domain in the interval 64 to 292 (NKVQLCSLLS…QSMVRLSAGR (229 aa)). [4Fe-4S] cluster contacts are provided by Cys-79, Cys-83, and Cys-86. [2Fe-2S] cluster is bound by residues Cys-123, Cys-155, Cys-215, and Arg-287.

The protein belongs to the radical SAM superfamily. Biotin synthase family. In terms of assembly, homodimer. It depends on [4Fe-4S] cluster as a cofactor. [2Fe-2S] cluster is required as a cofactor.

It catalyses the reaction (4R,5S)-dethiobiotin + (sulfur carrier)-SH + 2 reduced [2Fe-2S]-[ferredoxin] + 2 S-adenosyl-L-methionine = (sulfur carrier)-H + biotin + 2 5'-deoxyadenosine + 2 L-methionine + 2 oxidized [2Fe-2S]-[ferredoxin]. Its pathway is cofactor biosynthesis; biotin biosynthesis; biotin from 7,8-diaminononanoate: step 2/2. Functionally, catalyzes the conversion of dethiobiotin (DTB) to biotin by the insertion of a sulfur atom into dethiobiotin via a radical-based mechanism. The chain is Biotin synthase from Myxococcus xanthus (strain DK1622).